We begin with the raw amino-acid sequence, 227 residues long: Sperm-associated antigen 7 (227 aa).

The disordered stretch occupies residues 1–45 (MADLLGSILSSMEKPPSLGDQESRRKAREQAARLKKLQEQDKQQK). Ala-2 bears the N-acetylalanine mark. The span at 21-45 (QESRRKAREQAARLKKLQEQDKQQK) shows a compositional bias: basic and acidic residues. The short motif at 35–51 (KKLQEQDKQQKVEFRKR) is the Nuclear localization signal element. Residues 46–109 (VEFRKRMEKE…DCRYVMIFKK (64 aa)) enclose the R3H domain. Ser-114 bears the Phosphoserine mark. Residues 118–161 (LDSYRHGEEWDPQKAEEKRKLKELAQKQEEEAAQQGPAVVSPAS) are disordered. The segment covering 119–147 (DSYRHGEEWDPQKAEEKRKLKELAQKQEE) has biased composition (basic and acidic residues). The Nuclear localization signal motif lies at 122-139 (RHGEEWDPQKAEEKRKLK). Residues Ser-158 and Ser-202 each carry the phosphoserine modification.

Its subcellular location is the nucleus. This is Sperm-associated antigen 7 (Spag7) from Mus musculus (Mouse).